The sequence spans 356 residues: Histidinol-phosphate aminotransferase (356 aa).

Lys211 bears the N6-(pyridoxal phosphate)lysine mark.

It belongs to the class-II pyridoxal-phosphate-dependent aminotransferase family. Histidinol-phosphate aminotransferase subfamily. In terms of assembly, homodimer. Requires pyridoxal 5'-phosphate as cofactor.

It carries out the reaction L-histidinol phosphate + 2-oxoglutarate = 3-(imidazol-4-yl)-2-oxopropyl phosphate + L-glutamate. It participates in amino-acid biosynthesis; L-histidine biosynthesis; L-histidine from 5-phospho-alpha-D-ribose 1-diphosphate: step 7/9. The protein is Histidinol-phosphate aminotransferase of Blochmanniella floridana.